A 461-amino-acid polypeptide reads, in one-letter code: D-phenylhydantoinase (461 aa).

A divalent metal cation contacts are provided by His-59, His-61, and Lys-151. The residue at position 151 (Lys-151) is an N6-carboxylysine. Substrate is bound at residue Tyr-156. A divalent metal cation contacts are provided by His-182 and His-239. Ser-286 contributes to the substrate binding site. A divalent metal cation is bound at residue Asp-313. Asn-335 is a substrate binding site.

Belongs to the metallo-dependent hydrolases superfamily. Hydantoinase/dihydropyrimidinase family. As to quaternary structure, homotetramer. It depends on a divalent metal cation as a cofactor. Post-translationally, carboxylation allows a single lysine to coordinate two divalent metal cations.

The enzyme catalyses D-5-phenylhydantoin + H2O = N-carbamoyl-D-phenylglycine + H(+). Its function is as follows. Catalyzes the stereospecific hydrolysis of the cyclic amide bond of D-hydantoin derivatives with an aromatic side chains at the 5'-position. Has no activity on dihydropyrimidines. The physiological function is unknown. The chain is D-phenylhydantoinase from Escherichia coli O81 (strain ED1a).